A 268-amino-acid polypeptide reads, in one-letter code: 3-methyl-2-oxobutanoate hydroxymethyltransferase (268 aa).

Residues Asp46 and Asp85 each coordinate Mg(2+). 3-methyl-2-oxobutanoate is bound by residues 46-47 (DS), Asp85, and Lys115. Glu117 is a binding site for Mg(2+). The active-site Proton acceptor is the Glu184.

It belongs to the PanB family. As to quaternary structure, homodecamer; pentamer of dimers. It depends on Mg(2+) as a cofactor.

The protein resides in the cytoplasm. It catalyses the reaction 3-methyl-2-oxobutanoate + (6R)-5,10-methylene-5,6,7,8-tetrahydrofolate + H2O = 2-dehydropantoate + (6S)-5,6,7,8-tetrahydrofolate. Its pathway is cofactor biosynthesis; (R)-pantothenate biosynthesis; (R)-pantoate from 3-methyl-2-oxobutanoate: step 1/2. Catalyzes the reversible reaction in which hydroxymethyl group from 5,10-methylenetetrahydrofolate is transferred onto alpha-ketoisovalerate to form ketopantoate. In Magnetococcus marinus (strain ATCC BAA-1437 / JCM 17883 / MC-1), this protein is 3-methyl-2-oxobutanoate hydroxymethyltransferase.